Consider the following 173-residue polypeptide: Ribosome maturation factor RimM (173 aa).

The PRC barrel domain occupies 92 to 165 (EDEYYHTDLI…RVVVALPQEI (74 aa)).

This sequence belongs to the RimM family. Binds ribosomal protein uS19.

The protein resides in the cytoplasm. Functionally, an accessory protein needed during the final step in the assembly of 30S ribosomal subunit, possibly for assembly of the head region. Essential for efficient processing of 16S rRNA. May be needed both before and after RbfA during the maturation of 16S rRNA. It has affinity for free ribosomal 30S subunits but not for 70S ribosomes. The polypeptide is Ribosome maturation factor RimM (Bradyrhizobium diazoefficiens (strain JCM 10833 / BCRC 13528 / IAM 13628 / NBRC 14792 / USDA 110)).